The following is a 208-amino-acid chain: ATP-dependent Clp protease proteolytic subunit (208 aa).

The Nucleophile role is filled by Ser-98. His-123 is an active-site residue.

It belongs to the peptidase S14 family. Fourteen ClpP subunits assemble into 2 heptameric rings which stack back to back to give a disk-like structure with a central cavity, resembling the structure of eukaryotic proteasomes.

It is found in the cytoplasm. The enzyme catalyses Hydrolysis of proteins to small peptides in the presence of ATP and magnesium. alpha-casein is the usual test substrate. In the absence of ATP, only oligopeptides shorter than five residues are hydrolyzed (such as succinyl-Leu-Tyr-|-NHMec, and Leu-Tyr-Leu-|-Tyr-Trp, in which cleavage of the -Tyr-|-Leu- and -Tyr-|-Trp bonds also occurs).. Functionally, cleaves peptides in various proteins in a process that requires ATP hydrolysis. Has a chymotrypsin-like activity. Plays a major role in the degradation of misfolded proteins. In Wolbachia pipientis subsp. Culex pipiens (strain wPip), this protein is ATP-dependent Clp protease proteolytic subunit.